A 499-amino-acid chain; its full sequence is Proline dehydrogenase 1, mitochondrial (499 aa).

The N-terminal 72 residues, 1–72 (MATRLLRTNF…LDLSDQARLF (72 aa)), are a transit peptide targeting the mitochondrion.

The protein belongs to the proline oxidase family. FAD is required as a cofactor. In terms of tissue distribution, ubiquitous. Highest expression in pollen grains, in the stigma and in developing embryos.

Its subcellular location is the mitochondrion. The catalysed reaction is L-proline + a quinone = (S)-1-pyrroline-5-carboxylate + a quinol + H(+). Its pathway is amino-acid degradation; L-proline degradation into L-glutamate; L-glutamate from L-proline: step 1/2. Its function is as follows. Converts proline to delta-1-pyrroline-5-carboxylate. The polypeptide is Proline dehydrogenase 1, mitochondrial (POX1) (Arabidopsis thaliana (Mouse-ear cress)).